Reading from the N-terminus, the 357-residue chain is Chorismate synthase (357 aa).

Arg-46 is an NADP(+) binding site. FMN-binding positions include 123-125 (RSS), 235-236 (NA), Gly-275, 290-294 (KPTPS), and Arg-316.

It belongs to the chorismate synthase family. In terms of assembly, homotetramer. It depends on FMNH2 as a cofactor.

The catalysed reaction is 5-O-(1-carboxyvinyl)-3-phosphoshikimate = chorismate + phosphate. It functions in the pathway metabolic intermediate biosynthesis; chorismate biosynthesis; chorismate from D-erythrose 4-phosphate and phosphoenolpyruvate: step 7/7. Functionally, catalyzes the anti-1,4-elimination of the C-3 phosphate and the C-6 proR hydrogen from 5-enolpyruvylshikimate-3-phosphate (EPSP) to yield chorismate, which is the branch point compound that serves as the starting substrate for the three terminal pathways of aromatic amino acid biosynthesis. This reaction introduces a second double bond into the aromatic ring system. The chain is Chorismate synthase from Nitratiruptor sp. (strain SB155-2).